The primary structure comprises 215 residues: Pyrrolidone-carboxylate peptidase (215 aa).

Residues glutamate 78, cysteine 141, and histidine 165 contribute to the active site.

Belongs to the peptidase C15 family. Homotetramer.

Its subcellular location is the cytoplasm. It catalyses the reaction Release of an N-terminal pyroglutamyl group from a polypeptide, the second amino acid generally not being Pro.. Its function is as follows. Removes 5-oxoproline from various penultimate amino acid residues except L-proline. This Streptococcus pyogenes serotype M3 (strain SSI-1) protein is Pyrrolidone-carboxylate peptidase.